Reading from the N-terminus, the 305-residue chain is Coiled-coil domain-containing protein 69 (305 aa).

Gly2 carries N-myristoyl glycine lipidation. Residues 13-41 are disordered; the sequence is LRKKKRQKAHQEGLTSKELNDLNAKSQEP. Coiled coils occupy residues 42–167 and 216–278; these read NELL…SVLS and MERN…KEQN.

The protein belongs to the CCDC69 family.

Its subcellular location is the cytoplasm. It is found in the cytoskeleton. It localises to the spindle. The protein localises to the midbody. May act as a scaffold to regulate the recruitment and assembly of spindle midzone components. This Xenopus tropicalis (Western clawed frog) protein is Coiled-coil domain-containing protein 69 (ccdc69).